Here is a 203-residue protein sequence, read N- to C-terminus: Outer-membrane lipoprotein carrier protein (203 aa).

The N-terminal stretch at 1 to 20 (MRRGRVWLAALCLAAGAAHA) is a signal peptide.

It belongs to the LolA family. As to quaternary structure, monomer.

It is found in the periplasm. In terms of biological role, participates in the translocation of lipoproteins from the inner membrane to the outer membrane. Only forms a complex with a lipoprotein if the residue after the N-terminal Cys is not an aspartate (The Asp acts as a targeting signal to indicate that the lipoprotein should stay in the inner membrane). This Methylibium petroleiphilum (strain ATCC BAA-1232 / LMG 22953 / PM1) protein is Outer-membrane lipoprotein carrier protein.